Consider the following 145-residue polypeptide: AP-2 complex subunit sigma (145 aa).

The protein belongs to the adaptor complexes small subunit family. As to quaternary structure, adaptor protein complex 2 (AP-2) is a heterotetramer composed of two large adaptins (alpha-type subunit apl3 and beta-type subunit apl1), a medium chain (mu-type subunit apm4) and a small adaptin (sigma-type subunit aps2).

It localises to the cell membrane. The protein localises to the membrane. The protein resides in the coated pit. Its function is as follows. Component of the adaptor complexes which link clathrin to receptors in coated vesicles. Clathrin-associated protein complexes are believed to interact with the cytoplasmic tails of membrane proteins, leading to their selection and concentration. The protein is AP-2 complex subunit sigma (aps2) of Emericella nidulans (strain FGSC A4 / ATCC 38163 / CBS 112.46 / NRRL 194 / M139) (Aspergillus nidulans).